We begin with the raw amino-acid sequence, 428 residues long: Tyrosine--tRNA ligase (428 aa).

Residue Tyr36 coordinates L-tyrosine. The 'HIGH' region signature appears at 41 to 50; it reads PTARSLHIGS. Tyr169 and Gln173 together coordinate L-tyrosine. Positions 229–233 match the 'KMSKS' region motif; it reads KMGKT. Lys232 serves as a coordination point for ATP. One can recognise an S4 RNA-binding domain in the interval 361-427; it reads IPAYEIMHEC…GKKKYMIIKV (67 aa).

The protein belongs to the class-I aminoacyl-tRNA synthetase family. TyrS type 1 subfamily. In terms of assembly, homodimer.

The protein localises to the cytoplasm. The enzyme catalyses tRNA(Tyr) + L-tyrosine + ATP = L-tyrosyl-tRNA(Tyr) + AMP + diphosphate + H(+). In terms of biological role, catalyzes the attachment of tyrosine to tRNA(Tyr) in a two-step reaction: tyrosine is first activated by ATP to form Tyr-AMP and then transferred to the acceptor end of tRNA(Tyr). In Syntrophus aciditrophicus (strain SB), this protein is Tyrosine--tRNA ligase.